A 185-amino-acid polypeptide reads, in one-letter code: Ribosome-recycling factor (185 aa).

It belongs to the RRF family.

The protein resides in the cytoplasm. Functionally, responsible for the release of ribosomes from messenger RNA at the termination of protein biosynthesis. May increase the efficiency of translation by recycling ribosomes from one round of translation to another. The polypeptide is Ribosome-recycling factor (Listeria monocytogenes serovar 1/2a (strain ATCC BAA-679 / EGD-e)).